The sequence spans 292 residues: Probable porphobilinogen deaminase (292 aa).

C233 bears the S-(dipyrrolylmethanemethyl)cysteine mark.

It belongs to the HMBS family. Dipyrromethane is required as a cofactor.

The catalysed reaction is 4 porphobilinogen + H2O = hydroxymethylbilane + 4 NH4(+). Its pathway is porphyrin-containing compound metabolism; protoporphyrin-IX biosynthesis; coproporphyrinogen-III from 5-aminolevulinate: step 2/4. In terms of biological role, tetrapolymerization of the monopyrrole PBG into the hydroxymethylbilane pre-uroporphyrinogen in several discrete steps. This Methanocaldococcus jannaschii (strain ATCC 43067 / DSM 2661 / JAL-1 / JCM 10045 / NBRC 100440) (Methanococcus jannaschii) protein is Probable porphobilinogen deaminase (hemC).